The chain runs to 199 residues: Recombination protein RecR (199 aa).

The C4-type zinc finger occupies 56–71 (CAICGNVSEKETCGIC). The 96-residue stretch at 79 to 174 (ATICVVEEAK…RVTRLASGLP (96 aa)) folds into the Toprim domain.

This sequence belongs to the RecR family.

Functionally, may play a role in DNA repair. It seems to be involved in an RecBC-independent recombinational process of DNA repair. It may act with RecF and RecO. The protein is Recombination protein RecR of Clavibacter michiganensis subsp. michiganensis (strain NCPPB 382).